We begin with the raw amino-acid sequence, 402 residues long: CinA-like protein (402 aa).

This sequence belongs to the CinA family.

This is CinA-like protein from Escherichia coli O17:K52:H18 (strain UMN026 / ExPEC).